A 427-amino-acid polypeptide reads, in one-letter code: Trigger factor (427 aa).

Residues 165–250 form the PPIase FKBP-type domain; the sequence is GDTVVIDFEG…LHEIQEQVPA (86 aa).

The protein belongs to the FKBP-type PPIase family. Tig subfamily.

The protein localises to the cytoplasm. The catalysed reaction is [protein]-peptidylproline (omega=180) = [protein]-peptidylproline (omega=0). Involved in protein export. Acts as a chaperone by maintaining the newly synthesized protein in an open conformation. Functions as a peptidyl-prolyl cis-trans isomerase. This is Trigger factor from Sulfurovum sp. (strain NBC37-1).